The chain runs to 142 residues: Large ribosomal subunit protein bL17 (142 aa).

It belongs to the bacterial ribosomal protein bL17 family. In terms of assembly, part of the 50S ribosomal subunit. Contacts protein L32.

The polypeptide is Large ribosomal subunit protein bL17 (Methylocella silvestris (strain DSM 15510 / CIP 108128 / LMG 27833 / NCIMB 13906 / BL2)).